The following is a 683-amino-acid chain: Elongation factor G 2 (683 aa).

Positions 4-279 constitute a tr-type G domain; it reads QQMRNIGIMA…AVVEYLPAPQ (276 aa). Residues 13 to 20, 77 to 81, and 131 to 134 contribute to the GTP site; these read AHVDAGKT, DTPGH, and NKMD.

It belongs to the TRAFAC class translation factor GTPase superfamily. Classic translation factor GTPase family. EF-G/EF-2 subfamily.

It is found in the cytoplasm. Catalyzes the GTP-dependent ribosomal translocation step during translation elongation. During this step, the ribosome changes from the pre-translocational (PRE) to the post-translocational (POST) state as the newly formed A-site-bound peptidyl-tRNA and P-site-bound deacylated tRNA move to the P and E sites, respectively. Catalyzes the coordinated movement of the two tRNA molecules, the mRNA and conformational changes in the ribosome. The sequence is that of Elongation factor G 2 (fusB) from Treponema pallidum (strain Nichols).